A 445-amino-acid chain; its full sequence is Histamine H3 receptor (445 aa).

Residues 1 to 40 (MERAPPDGLMNASGALAGEAAAAAGGARTFSAAWTAVLAA) are Extracellular-facing. An N-linked (GlcNAc...) asparagine glycan is attached at Asn-11. Residues 41–61 (LMALLIVATVLGNALVMLAFV) form a helical membrane-spanning segment. At 62–71 (ADSSLRTQNN) the chain is on the cytoplasmic side. The helical transmembrane segment at 72-92 (FFLLNLAISDFLVGVFCIPLY) threads the bilayer. Over 93–109 (VPYVLTGRWTFGRGLCK) the chain is Extracellular. Cys-108 and Cys-189 form a disulfide bridge. Residues 110 to 130 (LWLVVDYLLCTSSVFNIVLIS) form a helical membrane-spanning segment. Over 131–157 (YDRFLSVTRAVSYRAQQGDTRRAVRKM) the chain is Cytoplasmic. The helical transmembrane segment at 158–178 (VLVWVLAFLLYGPAILSWEYL) threads the bilayer. Residues 179 to 197 (SGGSSIPEGHCYAEFFYNW) are Extracellular-facing. A helical membrane pass occupies residues 198–218 (YFLITASTLEFFTPFLSVTFF). Residues 219 to 359 (NLSIYLNIQR…LSRDKKVAKS (141 aa)) lie on the Cytoplasmic side of the membrane. Disordered stretches follow at residues 236–264 (GGAR…WGCW) and 288–336 (AGEA…LEKR). Residues 299–312 (AAASPTSSSGSSSR) show a composition bias toward low complexity. A helical transmembrane segment spans residues 360-380 (LAIIVSIFGLCWAPYTLLMII). The Extracellular segment spans residues 381-398 (RAACHGHCVPDYWYETSF). The chain crosses the membrane as a helical span at residues 399-419 (WLLWANSAVNPVLYPLCHYSF). Residues 420 to 445 (RRAFTKLLCPQKLKVQPHSSLEHCWK) lie on the Cytoplasmic side of the membrane. The residue at position 439 (Ser-439) is a Phosphoserine.

Belongs to the G-protein coupled receptor 1 family. Expressed widely and abundantly throughout the brain. Highly expressed in discrete neuronal populations such as pyramidal cells in cerebral cortex or cerebellar Purkinje cells.

Its subcellular location is the cell membrane. The H3 subclass of histamine receptors could mediate the histamine signals in CNS and peripheral nervous system. Signals through the inhibition of adenylate cyclase and displays high constitutive activity (spontaneous activity in the absence of agonist). This Cavia porcellus (Guinea pig) protein is Histamine H3 receptor (HRH3).